We begin with the raw amino-acid sequence, 455 residues long: Glutamate-1-semialdehyde 2,1-aminomutase (455 aa).

Lysine 286 is modified (N6-(pyridoxal phosphate)lysine).

It belongs to the class-III pyridoxal-phosphate-dependent aminotransferase family. HemL subfamily. Homodimer. Pyridoxal 5'-phosphate serves as cofactor.

It is found in the cytoplasm. The enzyme catalyses (S)-4-amino-5-oxopentanoate = 5-aminolevulinate. It participates in porphyrin-containing compound metabolism; protoporphyrin-IX biosynthesis; 5-aminolevulinate from L-glutamyl-tRNA(Glu): step 2/2. In Clavibacter michiganensis subsp. michiganensis (strain NCPPB 382), this protein is Glutamate-1-semialdehyde 2,1-aminomutase.